Reading from the N-terminus, the 563-residue chain is MFNCDEDLKAYEDELYHEETSSDESIDSELEFHLYSQVHYSQNLSESKPEEDTGGDSVTYVPGAKQQNNACTEKDDKLVDIIILSDSDAKVSDTCPVIILSDTTEEDSVYSSKIKKKYSSTYVQGESLCGPCSHSTPKVSAPQSNNFKSQKSCQNSSSKNYSGGYVQEVLVIRGSSEDEEANKSENDIIISESDMSDVENWMLLGRAKEDGDASIQLNLEGYKILSDDEGERGAAWSISEKDVEAQIGNYTPLRRSNRYYTDKNVVCRNCDKRGHLSKNCPVPKKLPACCLCGERGHYQNSCPSRYCLNCFLPGHFFKECIERAYWRKTCHRCSMPGHYADACPEIWRQYHLTIKAGPIKKPKSHSGQKDIVYCCNCAKKGHCIYECKERRMNSDKLPTCQLVFSYDHEYDIRKRNERTKSKIKDFQKAGLLTCEMREFSESKVDAKPPAKKRKKKHPSKKERKGTIRDYECAETKQKKKHKKRKSGLQEIEGDFPRGIPNSYVELKKPSKKYDGSFLHLDKTKDMFKNRQKKTRRGKRCSSAVDQDLLIIKQKKKKSKRKVA.

Disordered stretches follow at residues 41-64 and 133-157; these read SQNL…VPGA and SHST…QNSS. Positions 133 to 142 are enriched in polar residues; that stretch reads SHSTPKVSAP. Residues 143–157 show a composition bias toward low complexity; sequence QSNNFKSQKSCQNSS. CCHC-type zinc fingers lie at residues 265–282, 287–304, 305–322, 328–345, and 372–389; these read VVCR…NCPV, PACC…SCPS, RYCL…ECIE, KTCH…ACPE, and VYCC…ECKE. A disordered region spans residues 443 to 494; the sequence is KVDAKPPAKKRKKKHPSKKERKGTIRDYECAETKQKKKHKKRKSGLQEIEGD. Positions 449-463 are enriched in basic residues; sequence PAKKRKKKHPSKKER. Residues 464–476 are compositionally biased toward basic and acidic residues; that stretch reads KGTIRDYECAETK. A compositionally biased stretch (basic residues) spans 477 to 486; it reads QKKKHKKRKS.

As to quaternary structure, component of a nucleolar TRAMP-like complex, an ATP-dependent exosome regulatory complex consisting of a helicase (MTREX), an oligadenylate polymerase (PAPD5 or PAPD7), and a substrate specific RNA-binding factor (ZCCHC7 or ZCCHC8). Several TRAMP-like complexes exist with specific compositions and are associated with nuclear, or nucleolar RNA exosomes.

It is found in the nucleus. Its subcellular location is the nucleolus. This chain is Zinc finger CCHC domain-containing protein 7 (zcchc7), found in Xenopus laevis (African clawed frog).